We begin with the raw amino-acid sequence, 2025 residues long: MATGGGPFEEVMHDQDLPNWSNDSVDDRLNNMEWGGQQKKANRSSEKNKKKFGVASDKRVTNAISPESSPGVGRRRTKIPHTFPHSRYMTQMSVPEQAELEKLKQRINFSDLDQRSIGSDSQGRATAANNKRQLSENRKPFNFLPMQINTNKSKDATASLPKREMTTSAQCKELFASALSNDLLQNCQVSEEDGRGEPAMESSQIVSRLVQIRDYITKASSMREDLVEKNERSANVERLTHLIEHLKEQEKSYMKFLQKILARDPQQEPMEETENLKKQHDLLKRMLQQQEQLRALQGRQAALLALQHKAEQAIAVMDDSVVTETTGSLSGVSITSELNEELNDLIQRFHNQLRDSQPPAVPDNRRQAESLSLTREISQSRNPSVSEHLPDEKVQLFSKMRVLQEKKQKMDKLLGELHNLRDQHLNNSSFVPSTSLQRSGDKRSSTVALSAPVGFASAVNGEANSLISSVPCPATSLVSQNESENEGHLNPAEKLQKLNEVQKRLNELRELVHYYEQTSDMMTDAVNENTKDEETEESEYDSEHENSEPVTNIRNPQVASTWNEVNTNSNTQCGSNNRDGRPVNSNCEINNRSAANIRALNMPPLDCRYNREGEQRLHVAHGEDEEEEVEEEGVSGASLSSRRSSLVDEAPEDEEFEQKISRLMAAKEKLKQLQDLVAMVQDDDATQVVVPAASNLDDFYAAEEDIKQNSNNARENSNKIDTGVNEKTREKFYEAKLQQQQRELKQLQEERKKLIEIQEKIQAVQKACPDLQLSATSISSGPTKKYLPAITSTPTVNENDSSTSKCVIDPEDSSVVDNELWSDMRRHEMLREELRQRRKQLEALMAEHQRRQGLAETSSPVAISLRSDGSENLCTPQQSRTEKTMATWGGSTQCALDEEGDEDGYLSEGIVRTDEEEEEEQDASSNDNFPIYPPSMNQNSYNVKETKTRWKSNRPVSADGNYRPLAKTRQQNISMQRQENLRWVSELSYIEEKEQWQEQINQLKKQLDFSVNICQTLMQDQQTLSCLLQTLLTGPYSVLPSNVASPQVHLIMHQLNQCYTQLTWQQNNVQRLKQMLTELMRQQNQHPEKPRSKERGSSASHPSSPNLFCPFSFPTQPVNLFNLPGFTNFPSFAPGMNFSPLFPSNFGDFSQNVSTPTEQQQPLAQNPSGKTEYMAFPKPFESSSSLGAEKQRNQKQPEEEAENTKTPWLYDQEGGVEKPFFKTGFTESVEKATNSNRKNQPDTSRRRRQFDEESLESFSSMPDPIDPTTVTKTFKTRKASAQASLASKDKTPKSKSKKRNSTQLKSRVKNIGYESASVSSTCEPCKNRNRHSAQTEEPVQAKLFSRKNHEQLEKIIKYSRSAEISSETGSDFSMFEALRDTIYSEVATLISQNESRPHFLIELFHELQLLNTDYLRQRALYALQDIVSRHISESDEREGENVKPVNSGTWVASNSELTPSESLVTTDDETFEKNFERETHKVSEQNDADNVSVMSVSSNFEPFATDDLGNTVIHLDQALARMREYERMKTETESHSNMRCTCRVIEDEDGAAAAATVSNSEETPIIENHNSPQPISDVSAVPCPRIDTQQLDRQIKAIMKEVIPFLKEHMDEVCSSQLLTSVRRMVLTLTQQNDESKEFVKFFHKQLGSILQDSLAKFAGRKLKDCGEDLLVEISEVLFNELAFFKLMQDLDNNSIAVKQRCKRKIEAAGVRQSYAKEAKRILEGDHGSPAGEIDDEDKDKDETETVKQTQTSEVYDAKGPKNVRSDVSDQEEDEESERCPVSINLSKAESQALTNYGSGEDENEDEEMEDFEESPVDIQTSLQANTETTEENEHDSQILQHDLEKTPESTNVPSDQEPTSKNDQDSSPVKPCYLNILENEQQLNSATHKDSLTTTDSSKQPEPLPLPLAASETLVPRVKEVKSAQETPESSLAGSPDTESPVLVNDYEAESGNISQKSDEEDFVKVEDLPLKLTVYSEEELRKKMIEEEQKNHLSGEICEMQTEELAGNSQILKEPETVGAQSI.

The segment at 1–91 is disordered; sequence MATGGGPFEE…TFPHSRYMTQ (91 aa). The residue at position 2 (Ala2) is an N-acetylalanine. The tract at residues 2-1458 is mediates interaction with DZIP1; that stretch reads ATGGGPFEEV…TWVASNSELT (1457 aa). 8 positions are modified to phosphoserine: Ser65, Ser68, Ser69, Ser93, Ser110, Ser116, Ser119, and Ser159. Positions 111-140 are disordered; the sequence is DLDQRSIGSDSQGRATAANNKRQLSENRKP. A compositionally biased stretch (polar residues) spans 116–132; that stretch reads SIGSDSQGRATAANNKR. The stretch at 218 to 301 forms a coiled coil; that stretch reads KASSMREDLV…QLRALQGRQA (84 aa). The segment at 354 to 390 is disordered; that stretch reads RDSQPPAVPDNRRQAESLSLTREISQSRNPSVSEHLP. Over residues 369–385 the composition is skewed to polar residues; that stretch reads ESLSLTREISQSRNPSV. Ser370 is modified (phosphoserine). Ser372 is subject to Phosphoserine; by PLK4. A Phosphoserine modification is found at Ser384. N6-acetyllysine is present on Lys399. 2 coiled-coil regions span residues 399–426 and 492–518; these read KMRV…QHLN and AEKL…YEQT. 2 disordered regions span residues 528-553 and 565-586; these read ENTK…VTNI and VNTN…VNSN. Residues 531–540 show a composition bias toward acidic residues; sequence KDEETEESEY. At Ser593 the chain carries Phosphoserine. The disordered stretch occupies residues 620 to 654; the sequence is AHGEDEEEEVEEEGVSGASLSSRRSSLVDEAPEDE. A compositionally biased stretch (acidic residues) spans 623 to 633; it reads EDEEEEVEEEG. Positions 634 to 644 are enriched in low complexity; sequence VSGASLSSRRS. Ser644 is subject to Phosphoserine. Coiled coils occupy residues 652–772 and 822–856; these read EDEE…PDLQ and SDMR…GLAE. Thr857 is modified (phosphothreonine). Residues Ser859, Ser864, Ser867, and Ser870 each carry the phosphoserine modification. Disordered regions lie at residues 866-885 and 913-940; these read RSDG…EKTM and TDEE…NQNS. Positions 870 to 879 are enriched in polar residues; sequence SENLCTPQQS. Thr875 is subject to Phosphothreonine. A phosphoserine mark is found at Ser957, Ser974, Ser985, and Ser988. Coiled-coil stretches lie at residues 985-1017 and 1061-1086; these read SELS…CQTL and QLTW…QNQH. Disordered regions lie at residues 1081–1105 and 1149–1213; these read RQQN…PSSP and FSQN…YDQE. Residues 1086-1096 show a composition bias toward basic and acidic residues; sequence HPEKPRSKERG. The span at 1149–1169 shows a compositional bias: polar residues; that stretch reads FSQNVSTPTEQQQPLAQNPSG. Ser1182 and Ser1185 each carry phosphoserine. Over residues 1189–1198 the composition is skewed to basic and acidic residues; that stretch reads EKQRNQKQPE. Phosphoserine is present on residues Ser1228, Ser1254, Ser1257, Ser1259, and Ser1260. Residues 1230 to 1310 are disordered; sequence EKATNSNRKN…STQLKSRVKN (81 aa). Polar residues predominate over residues 1268 to 1285; it reads TTVTKTFKTRKASAQASL. Residues Ser1315 and Ser1317 each carry the phosphoserine modification. The disordered stretch occupies residues 1319 to 1338; that stretch reads SSTCEPCKNRNRHSAQTEEP. Phosphothreonine is present on Thr1466. Phosphoserine occurs at positions 1571, 1695, 1729, 1766, 1769, 1777, and 1783. A disordered region spans residues 1720 to 1943; the sequence is KRILEGDHGS…AGSPDTESPV (224 aa). Positions 1756 to 1768 are enriched in basic and acidic residues; it reads YDAKGPKNVRSDV. A compositionally biased stretch (polar residues) spans 1784–1798; that stretch reads INLSKAESQALTNYG. Positions 1800–1816 are enriched in acidic residues; that stretch reads GEDENEDEEMEDFEESP. Polar residues-rich tracts occupy residues 1818–1828, 1849–1858, 1879–1901, and 1925–1934; these read DIQTSLQANTE, ESTNVPSDQE, ENEQ…SSKQ, and AQETPESSLA. Residues Ser1959 and Ser1978 each carry the phosphoserine modification.

This sequence belongs to the PCM1 family. In terms of assembly, self-associates. Interacts with BBS4, BBS8, CETN3, HAP1, NDE1, NDEL1, MAP1LC3B, GABARAPAL2, and GABARAP. Interacts with CEP131; the interaction increases in response to ultraviolet light (UV) radiation. Associates with microtubule; association to microtubule is reduced in response to cellular stress, such as ultraviolet light (UV) radiation or heat shock, in a process that requires p38 MAP kinase signaling. Interacts with C2CD3. Interacts with CFAP263. Interacts with SSX2IP. Interacts with CCDC13. Interacts with CEP290. Interacts with PARD6A. Interacts with KIAA0753/OFIP, CEP20/FOR20 and OFD1; the interaction with CEP20/FOR20 and OFD1 may be mediated by KIAA0753/OFIP. Interacts with CCDC66. Interacts with CCDC61. Interacts with DZIP1; localizes DZIP1 and the associated BBSome to centriolar satellite. Interacts with CSTPP1, TTLL1, TPGS1 and LRRC49. Interacts with CFAP53. Ubiquitinated. Undergoes monoubiquitination catalyzed by the E3 ubiquitin-protein ligase MIB1 in proliferating cells, preventing cilia formation. Monoubiquitination by MIB1 is inhibited in response to cellular stress, such as ultraviolet light (UV) radiation or heat shock, resulting in cilia formation initiation. In terms of processing, phosphorylated on multiple serine and threonine residues by DYRK3 during the G2-to-M transition, after the nuclear-envelope breakdown. Phosphorylation by DYRK3 promotes disassembly of pericentriolar material. Phosphorylation at Ser-372 mediated by PLK4 is required to maintain the integrity of centriolar satellites. In terms of tissue distribution, expressed in the hippocampus and dentate gyrus, the columnar epithelial cells of bronchioles, the olfactory epithelium, the pericardium and the inner segment of the retina.

It is found in the cytoplasm. The protein resides in the cytoskeleton. The protein localises to the microtubule organizing center. Its subcellular location is the centrosome. It localises to the cytoplasmic granule. It is found in the centriolar satellite. The protein resides in the cilium basal body. Its function is as follows. Required for centrosome assembly and function. Essential for the correct localization of several centrosomal proteins including CEP250, CETN3, PCNT and NEK2. Required to anchor microtubules to the centrosome. Also involved in cilium biogenesis by recruiting the BBSome, a ciliary protein complex involved in cilium biogenesis, to the centriolar satellites. Recruits the tubulin polyglutamylase complex (TPGC) to centriolar satellites. In Mus musculus (Mouse), this protein is Pericentriolar material 1 protein.